Here is a 477-residue protein sequence, read N- to C-terminus: tRNA(Ile)-lysidine synthase (477 aa).

36–41 (SGGADS) contributes to the ATP binding site.

The protein belongs to the tRNA(Ile)-lysidine synthase family.

The protein localises to the cytoplasm. It catalyses the reaction cytidine(34) in tRNA(Ile2) + L-lysine + ATP = lysidine(34) in tRNA(Ile2) + AMP + diphosphate + H(+). In terms of biological role, ligates lysine onto the cytidine present at position 34 of the AUA codon-specific tRNA(Ile) that contains the anticodon CAU, in an ATP-dependent manner. Cytidine is converted to lysidine, thus changing the amino acid specificity of the tRNA from methionine to isoleucine. This is tRNA(Ile)-lysidine synthase from Treponema pallidum (strain Nichols).